A 145-amino-acid chain; its full sequence is Large ribosomal subunit protein uL15 (145 aa).

Composition is skewed to basic residues over residues M1–G13 and T22–G33. The disordered stretch occupies residues M1–K41.

Belongs to the universal ribosomal protein uL15 family. As to quaternary structure, part of the 50S ribosomal subunit.

Binds to the 23S rRNA. In Methanosphaera stadtmanae (strain ATCC 43021 / DSM 3091 / JCM 11832 / MCB-3), this protein is Large ribosomal subunit protein uL15.